The chain runs to 470 residues: A-type ATP synthase subunit B (470 aa).

The protein belongs to the ATPase alpha/beta chains family. As to quaternary structure, has multiple subunits with at least A(3), B(3), C, D, E, F, H, I and proteolipid K(x).

Its subcellular location is the cell membrane. In terms of biological role, component of the A-type ATP synthase that produces ATP from ADP in the presence of a proton gradient across the membrane. The B chain is a regulatory subunit. This is A-type ATP synthase subunit B from Haloarcula marismortui (strain ATCC 43049 / DSM 3752 / JCM 8966 / VKM B-1809) (Halobacterium marismortui).